Consider the following 136-residue polypeptide: 6,7-dimethyl-8-ribityllumazine synthase (136 aa).

Residues F11, 43–45 (VYD), and 67–69 (CVI) contribute to the 5-amino-6-(D-ribitylamino)uracil site. Residue 72-73 (DT) participates in (2S)-2-hydroxy-3-oxobutyl phosphate binding. The active-site Proton donor is H75. Residue L100 coordinates 5-amino-6-(D-ribitylamino)uracil. R115 contacts (2S)-2-hydroxy-3-oxobutyl phosphate.

This sequence belongs to the DMRL synthase family. As to quaternary structure, forms an icosahedral capsid composed of 60 subunits, arranged as a dodecamer of pentamers.

The catalysed reaction is (2S)-2-hydroxy-3-oxobutyl phosphate + 5-amino-6-(D-ribitylamino)uracil = 6,7-dimethyl-8-(1-D-ribityl)lumazine + phosphate + 2 H2O + H(+). It functions in the pathway cofactor biosynthesis; riboflavin biosynthesis; riboflavin from 2-hydroxy-3-oxobutyl phosphate and 5-amino-6-(D-ribitylamino)uracil: step 1/2. In terms of biological role, catalyzes the formation of 6,7-dimethyl-8-ribityllumazine by condensation of 5-amino-6-(D-ribitylamino)uracil with 3,4-dihydroxy-2-butanone 4-phosphate. This is the penultimate step in the biosynthesis of riboflavin. This is 6,7-dimethyl-8-ribityllumazine synthase from Methanococcus aeolicus (strain ATCC BAA-1280 / DSM 17508 / OCM 812 / Nankai-3).